The following is a 210-amino-acid chain: Outer-membrane lipoprotein LolB (210 aa).

The N-terminal stretch at 1–29 (MSLISNNEERSLRVRYCIAIALSALLISG) is a signal peptide. The N-palmitoyl cysteine moiety is linked to residue Cys-30. Cys-30 is lipidated: S-diacylglycerol cysteine.

This sequence belongs to the LolB family. Monomer.

It localises to the cell outer membrane. Functionally, plays a critical role in the incorporation of lipoproteins in the outer membrane after they are released by the LolA protein. This Coxiella burnetii (strain CbuK_Q154) (Coxiella burnetii (strain Q154)) protein is Outer-membrane lipoprotein LolB.